We begin with the raw amino-acid sequence, 59 residues long: Large ribosomal subunit protein uL30 (59 aa).

The protein belongs to the universal ribosomal protein uL30 family. In terms of assembly, part of the 50S ribosomal subunit.

In Escherichia coli (strain UTI89 / UPEC), this protein is Large ribosomal subunit protein uL30.